The following is a 253-amino-acid chain: Retinoic acid early-inducible protein 1-gamma (253 aa).

Residues 1-28 (MAKAAVTKRHHFMIQKLLILLSYGYTNG) form the signal peptide. The cysteines at positions 37 and 56 are disulfide-linked. N-linked (GlcNAc...) asparagine glycans are attached at residues Asn-38, Asn-70, Asn-83, Asn-143, and Asn-156. Cys-90 and Cys-190 are disulfide-bonded. The disordered stretch occupies residues 198-230 (LKQSKEKPRSTSRSPSITQLTSTSPLPPPSHST). Positions 211–221 (SPSITQLTSTS) are enriched in low complexity. Ser-227 carries GPI-anchor amidated serine lipidation. The propeptide at 228 to 253 (HSTSKKGFISVGLIFISLLFAFAFAM) is removed in mature form.

Belongs to the NKG2D ligand family. Post-translationally, glycosylated. Expressed predominantly in embryonic brain.

The protein resides in the cell membrane. In terms of biological role, acts as a ligand for KLRK1. This chain is Retinoic acid early-inducible protein 1-gamma (Raet1c), found in Mus musculus (Mouse).